A 1310-amino-acid polypeptide reads, in one-letter code: Cadherin-related family member 2 (1310 aa).

The N-terminal stretch at 1 to 20 (MAQLWLSCFLLPALVVSVAA) is a signal peptide. At 21–1154 (NVAPKFLANM…ESDLSKQLIS (1134 aa)) the chain is on the extracellular side. 3 Cadherin domains span residues 27 to 124 (LANM…APVF), 125 to 241 (QNTA…DPQF), and 242 to 353 (VREF…KPEF). Asn29, Asn134, Asn182, Asn188, Asn195, Asn300, Asn355, Asn371, Asn401, Asn460, Asn565, Asn600, Asn616, Asn632, Asn680, Asn696, Asn701, Asn775, Asn821, Asn871, Asn877, Asn911, Asn932, and Asn1107 each carry an N-linked (GlcNAc...) asparagine glycan. Cadherin domains follow at residues 368–480 (AQVN…RPTF), 481–586 (PQSL…APVV), 586–695 (VSGS…LPIF), 696–808 (NQSS…PPTL), 810–928 (VASL…APYF), and 930–1058 (PENK…TPKE). Residues 1155–1175 (VIIGLGVALLLVLVIMTMAFV) traverse the membrane as a helical segment. The Cytoplasmic segment spans residues 1176–1310 (CVRKSYNRKL…TNAGLDTTDL (135 aa)). The interval 1180 to 1310 (SYNRKLQAMK…TNAGLDTTDL (131 aa)) is mediates interaction with USH1C and MYO7B and is required for proper localization to microvilli tips and function in microvilli organization. Residue Ser1248 is modified to Phosphoserine. The segment covering 1259–1268 (NSQEIKEHRP) has biased composition (basic and acidic residues). The disordered stretch occupies residues 1259 to 1310 (NSQEIKEHRPPHTPPEPDPEPLSVVLLGRQAGASGQLEGPSYTNAGLDTTDL). Ser1299 carries the phosphoserine modification. A compositionally biased stretch (polar residues) spans 1299-1310 (SYTNAGLDTTDL).

As to quaternary structure, part of the IMAC/intermicrovillar adhesion complex/intermicrovillar tip-link complex composed of ANKS4B, MYO7B, USH1C, CDHR2 and CDHR5. Interacts with MAST2. Interacts (via cytoplasmic domain) with USH1C and MYO7B; required for proper localization of CDHR2 to microvilli tips and its function in brush border differentiation. Highly expressed in liver, kidney and colon. Moderately expressed in small intestine. Down-regulated in a number of liver and colon cancers. Expressed in duodenum with higher expression in enterocytes along the villus axis and lower expression in crypts (at protein level).

It localises to the apical cell membrane. Its subcellular location is the cell projection. It is found in the microvillus membrane. The protein localises to the cell junction. Its function is as follows. Intermicrovillar adhesion molecule that forms, via its extracellular domain, calcium-dependent heterophilic complexes with CDHR5 on adjacent microvilli. Thereby, controls the packing of microvilli at the apical membrane of epithelial cells. Through its cytoplasmic domain, interacts with microvillus cytoplasmic proteins to form the intermicrovillar adhesion complex/IMAC. This complex plays a central role in microvilli and epithelial brush border differentiation. May also play a role in cell-cell adhesion and contact inhibition in epithelial cells. This Homo sapiens (Human) protein is Cadherin-related family member 2.